Consider the following 510-residue polypeptide: UDP-galactopyranose mutase (510 aa).

Residues threonine 18, aspartate 38, leucine 46, and glycine 61 each contribute to the FAD site. Residues glycine 61 and glycine 62 each contribute to the UDP-alpha-D-galactose site. Histidine 63 is an FAD binding site. 3 residues coordinate NADH: histidine 68, arginine 91, and serine 93. 4 residues coordinate NADPH: histidine 68, arginine 91, serine 93, and tyrosine 104. UDP-alpha-D-galactose-binding residues include tyrosine 104, glutamine 107, methionine 159, tyrosine 162, asparagine 163, tryptophan 167, and arginine 182. NADPH is bound at residue asparagine 203. Asparagine 207 is a UDP-alpha-D-galactose binding site. Valine 242 contacts FAD. Tryptophan 315 and tyrosine 317 together coordinate NADPH. UDP-alpha-D-galactose-binding residues include tyrosine 317, arginine 327, and tyrosine 419. Arginine 327 provides a ligand contact to FAD. Residues tyrosine 419 and arginine 447 each coordinate NADH. 2 residues coordinate NADPH: tyrosine 419 and arginine 447. Arginine 447 contacts FAD. A UDP-alpha-D-galactose-binding site is contributed by tyrosine 453. FAD contacts are provided by glycine 456, asparagine 457, and glutamine 458. Asparagine 457 contributes to the UDP-alpha-D-galactose binding site. Residue asparagine 457 participates in NADH binding. Asparagine 457 serves as a coordination point for NADPH. NADPH is bound at residue histidine 460. FAD is bound at residue serine 461.

It belongs to the UDP-galactopyranose/dTDP-fucopyranose mutase family. In terms of assembly, homotetramer. It depends on FAD as a cofactor.

It catalyses the reaction UDP-alpha-D-galactose = UDP-alpha-D-galactofuranose. In terms of biological role, UDP-galactopyranose mutase, key flavoenzyme of galactofuranose metabolism that catalyzes the 6-to-5 ring contraction of UDP-galactopyranose to UDP-galactofuranose, the donor used by various galacto-furanosyltransferases. Controls the biosynthesis of galactomannan and galactofuranose containing glycoconjugates. The flavin functions as nucleophile, forming a flavin-sugar adduct that facilitates galactose-ring opening and contraction. The binding of UDP-galactopyranose induces profound conformational changes in the enzyme and two loops on opposite sides of the active site move toward each other by over 10 Angstroms to cover the substrate and create a closed active site. The sequence is that of UDP-galactopyranose mutase from Aspergillus fumigatus (Neosartorya fumigata).